The sequence spans 243 residues: Probable phosphatase CBO3379/CLC_3322 (243 aa).

Residues histidine 8, histidine 10, histidine 16, histidine 41, glutamate 74, histidine 102, histidine 132, aspartate 192, and histidine 194 each contribute to the Zn(2+) site.

The protein belongs to the PHP family. The cofactor is Zn(2+).

The polypeptide is Probable phosphatase CBO3379/CLC_3322 (Clostridium botulinum (strain Hall / ATCC 3502 / NCTC 13319 / Type A)).